Reading from the N-terminus, the 449-residue chain is Chlorobenzene dioxygenase subunit alpha (449 aa).

The Rieske domain maps to 54–163; sequence WLLLGHETQI…VATYKGLIFA (110 aa). Residues Cys-96, His-98, Cys-116, and His-119 each contribute to the [2Fe-2S] cluster site. The Fe cation site is built by His-222, His-228, and Asp-376.

Belongs to the bacterial ring-hydroxylating dioxygenase alpha subunit family. This dioxygenase system consists of four proteins: the two subunits of the oxygenase component (TecA1 and TecA2), a ferredoxin (TecA3) and a ferredoxin reductase (TecA4). [2Fe-2S] cluster is required as a cofactor. The cofactor is Fe cation.

It catalyses the reaction chlorobenzene + NADH + O2 + H(+) = (1R,2R)-3-chlorocyclohexa-3,5-diene-1,2-diol + NAD(+). The protein operates within aromatic compound metabolism. Part of the oxygenase component of the chlorobenzene dioxygenase system that catalyzes the dihydroxylation of a range of aromatic compounds, including chlorinated benzenes and toluenes, and dinuclear aromatics such as biphenyl and dibenzo-p-dioxin. The alpha subunit is responsible for substrate specificity. The sequence is that of Chlorobenzene dioxygenase subunit alpha from Cupriavidus sp. (strain PS12).